A 279-amino-acid polypeptide reads, in one-letter code: MKTIMLCAISSLSAGNCSEDCHYCTQSAGTKADIKRYKLKSPEQVVDEAKKAYANHALGFCLVTSGARLDDQKTEQVACIARAVGKEVPQLMLIACNGMASYDQLKELKNAGVFSYNHNLETSRDFFPKICTTHSWDERWQTNLDAKATGLQLCCGGIYGIGESKTDRASFRTSLKELAPFSSPINFFIANPALKIKTPRLSVDEALKIVDDTVLALPNARIMIAGGREAVLGERQYEIFDHGVSAVVIGDYLTTKGEESCKDIAKFKQMGFEFASKCH.

Residues 2 to 228 enclose the Radical SAM core domain; it reads KTIMLCAISS…NARIMIAGGR (227 aa). Cys17, Cys21, and Cys24 together coordinate [4Fe-4S] cluster. [2Fe-2S] cluster contacts are provided by Cys61, Cys96, Cys154, and Arg221.

The protein belongs to the radical SAM superfamily. Biotin synthase family. In terms of assembly, homodimer. [4Fe-4S] cluster serves as cofactor. The cofactor is [2Fe-2S] cluster.

The catalysed reaction is (4R,5S)-dethiobiotin + (sulfur carrier)-SH + 2 reduced [2Fe-2S]-[ferredoxin] + 2 S-adenosyl-L-methionine = (sulfur carrier)-H + biotin + 2 5'-deoxyadenosine + 2 L-methionine + 2 oxidized [2Fe-2S]-[ferredoxin]. Its pathway is cofactor biosynthesis; biotin biosynthesis; biotin from 7,8-diaminononanoate: step 2/2. In terms of biological role, catalyzes the conversion of dethiobiotin (DTB) to biotin by the insertion of a sulfur atom into dethiobiotin via a radical-based mechanism. The chain is Biotin synthase from Campylobacter curvus (strain 525.92).